The chain runs to 313 residues: Epoxide hydrolase 1 (313 aa).

Residues 25–299 (PAVLFLHGFP…AAHFINQEKA (275 aa)) form the AB hydrolase-1 domain. Catalysis depends on Asp100, which acts as the Nucleophile. Tyr149 contacts an epoxide. Tyr227 acts as the Proton donor in catalysis. The active-site Proton acceptor is the His292.

Belongs to the AB hydrolase superfamily. Epoxide hydrolase family. As to quaternary structure, homodimer. In terms of tissue distribution, highly expressed in fruits 15 days after anthesis (15-DAA).

The enzyme catalyses an epoxide + H2O = an ethanediol. The catalysed reaction is (24S)-24,25-epoxycucurbitadienol + H2O = (24R)-24,25-dihydroxycucurbitadienol. It functions in the pathway secondary metabolite biosynthesis; terpenoid biosynthesis. In terms of biological role, epoxide hydrolase involved in the biosynthesis of cucurbitacin and mogroside tetracyclic triterpene natural products (e.g. siamenoside I and mogrosides IV, V and VI). Cucurbitacins have cytotoxic properties and exhibit deterrent taste as a defense barrier against herbivores. Mogrosides are nonsugar highly oxygenated compounds used as high-intensity zero-calorie sweeteners; they also possess pharmacological properties such as regulating immunity, lowering blood sugar and lipid levels, protecting the liver, and acting as antioxidants and antitumor agents. Catalyzes the hydrolysis of aromatic epoxide-containing substrates, such as the conversion of 24,25-epoxycucurbitadienol to 24,25-dihydroxycucurbitadienol. The chain is Epoxide hydrolase 1 from Siraitia grosvenorii (Monk's fruit).